Here is a 176-residue protein sequence, read N- to C-terminus: CDP-archaeol synthase (176 aa).

5 helical membrane-spanning segments follow: residues 12-32 (FIYWFLKYYLSPMIANASPVL), 60-80 (GFYVGVLMGFLTSIGIGIILC), 85-105 (ILIGLGSSIFALIGDLLGSFI), 118-138 (PIIDQLDFALMATLYYYFLGI), and 141-161 (FISYPLYILYSLIIILALHII).

The protein belongs to the CDP-archaeol synthase family. Requires Mg(2+) as cofactor.

It is found in the cell membrane. It catalyses the reaction 2,3-bis-O-(geranylgeranyl)-sn-glycerol 1-phosphate + CTP + H(+) = CDP-2,3-bis-O-(geranylgeranyl)-sn-glycerol + diphosphate. It functions in the pathway membrane lipid metabolism; glycerophospholipid metabolism. Functionally, catalyzes the formation of CDP-2,3-bis-(O-geranylgeranyl)-sn-glycerol (CDP-archaeol) from 2,3-bis-(O-geranylgeranyl)-sn-glycerol 1-phosphate (DGGGP) and CTP. This reaction is the third ether-bond-formation step in the biosynthesis of archaeal membrane lipids. The sequence is that of CDP-archaeol synthase from Staphylothermus marinus (strain ATCC 43588 / DSM 3639 / JCM 9404 / F1).